The sequence spans 294 residues: Probable WRKY transcription factor 70 (294 aa).

Residues 72 to 94 (SQNASCDNDGKFEDSGDSRKRLG) are disordered. The segment covering 79 to 91 (NDGKFEDSGDSRK) has biased composition (basic and acidic residues). The Nuclear localization signal signature appears at 90-97 (RKRLGPVK). Residues 114-182 (IESTILEDAF…YIGNHTCNTN (69 aa)) constitute a DNA-binding region (WRKY). A disordered region spans residues 201–229 (SEDHKSPSLSTSMKEEDNPHRHHGSSTEN).

Belongs to the WRKY group III family. As to quaternary structure, interacts with WRKY30. Binds to BZR2/BES1 to cooperatively regulate the expression of target genes. Binds to unmodified (i.e. not sumoylated) NPR1. In terms of processing, phosphorylated and destabilized by ASK7/BIN2. As to expression, expressed in leaves and flowers.

It is found in the nucleus. Functionally, transcription factor involved in senescence, biotic and abiotic stress responses by modulating various phytohormones signaling pathways. Interacts specifically with the W box (5'-(T)TGAC[CT]-3'), a frequently occurring elicitor-responsive cis-acting element. Binds to the 5'-[CT]GACTTTT-3' motif in promoters of target genes to induce their expression. Binding to the W-box element of PR-1 promoter is mediated by not-sumoylated NPR1 in the absence of salicylic acid. Plays an important but not indispensable role in jasmonate and salicylic acid signaling. Positively regulates the salicylic acid (SA)-mediated signal pathway, but negatively the jasmonic acid (JA)-mediated signal pathway, thus determining the balance between these mutually antagonistic pathways. Together with WRKY46, WRKY53 and WRKY54, prevents defense response to the necrotrophic pathogens P.carotovorum and B.cinerea, but promotes defense responses (including SA-induced pathogenesis-related (PR) genes expression) against biotrophic/hemibiotrophic SA-monitored pathogens (e.g. P.syringae, E.carotovora subsp. carotovora SCC3193 and E.cichoracearum), probably by regulating negatively the JA/ET and positively the SA signaling pathways. Contributes to the suppression of jasmonic acid (MeJA)-induced expression of JA-responsive genes (e.g. PDF1.2). Promotes susceptibility to JA-monitored pathogens (e.g. A.brassicicola), probably by facilitating SA-controlled suppression of JA-mediated defense. Represses the biosynthesis of the phytoalexin camalexin and indol-3-ylmethyl glucosinolate (IGS). Represses both SA and JA/ethylene (ET) mediated defense marker genes expression. Negative regulator of SA biosynthesis. Negative regulator of EDS1-dependent defense against E.amylovora. Required for RPP4-mediated disease resistance and basal defense against H.parasitica, probably via late up-regulation (LURP) of resistance genes (e.g. CML10/CaBP22 and LURP1). Probably involved in defense responses toward insects (e.g. P.xylostella and B.brassicae). Together with WRKY54, negative regulator of developmental senescence, probably via the regulation of several senescence-associated markers genes. Together with WRKY46 and WRKY54, promotes brassinosteroid (BR)-regulated plant growth but prevent drought response by modulating gene expression. In collaboration with WRKY54, prevents stomatal closure and, consequently, osmotic stress tolerance. Regulates rhizobacterium B.cereus AR156-induced systemic resistance (ISR) to P.syringae pv. tomato DC3000. The polypeptide is Probable WRKY transcription factor 70 (Arabidopsis thaliana (Mouse-ear cress)).